Here is a 181-residue protein sequence, read N- to C-terminus: UPF0397 protein SSU98_0390 (181 aa).

The next 5 helical transmembrane spans lie at 9–29 (VVAT…INIP), 46–66 (LLAV…GHTL), 70–90 (LTYG…LVVG), 108–128 (ILFF…VIAP), and 147–167 (LVAG…LLVV).

It belongs to the UPF0397 family.

It localises to the cell membrane. This is UPF0397 protein SSU98_0390 from Streptococcus suis (strain 98HAH33).